Consider the following 225-residue polypeptide: MGKVVSVILAGGKGKRMGAEVSKQFIEINGKPIIYYTLKAFEECKDIDEIILVLPKDEIDYFKREIEPRFDFKISKIIEGGKERQDSVYNALNSIGDCDIVLIHDGARAFVSNKIIEDGIKYSREFGAAAPGVMPKDTIKVKNLEGFSVDTPNRASLVAVQTPQCFKYNLIKKGHNKVKNEKIQVTDDTMIVELLGEKVYLFEGDYKNIKVTTPEDLILAEHFVK.

The protein belongs to the IspD/TarI cytidylyltransferase family. IspD subfamily.

It carries out the reaction 2-C-methyl-D-erythritol 4-phosphate + CTP + H(+) = 4-CDP-2-C-methyl-D-erythritol + diphosphate. It functions in the pathway isoprenoid biosynthesis; isopentenyl diphosphate biosynthesis via DXP pathway; isopentenyl diphosphate from 1-deoxy-D-xylulose 5-phosphate: step 2/6. Catalyzes the formation of 4-diphosphocytidyl-2-C-methyl-D-erythritol from CTP and 2-C-methyl-D-erythritol 4-phosphate (MEP). In Clostridium perfringens (strain SM101 / Type A), this protein is 2-C-methyl-D-erythritol 4-phosphate cytidylyltransferase.